The chain runs to 471 residues: MKHLNTVMAESPALITIFLLGYLLSTECAVFLDRENATKILTRPKRYNSGKLEEFVRGNLERECIEERCSFEEAREVFENTEKTTEFWKQYVDGDQCESNPCLNGGICKDDISSYECWCQVGFEGRNCELDATCNIKNGRCKQFCKNSPDNKVICSCTEGYQLAEDQKSCEPTVPFPCGRASISYSSKKITRAETVFSNMDYENSTEAVFIQDDITDGAILNNVTESSESLNDFTRVVGGENAKPGQIPWQVILNGEIEAFCGGAIINEKWIVTAAHCLKPGDKIEVVAGEYNIDKKEDTEQRRNVIRTIPHHQYNATINKYSHDIALLELDKPLILNSYVTPICVANREYTNIFLKFGSGYVSGWGKVFNKGRQASILQYLRVPLVDRATCLRSTTFTIYNNMFCAGYREGGKDSCEGDSGGPHVTEVEGTSFLTGIISWGEECAMKGKYGIYTKVSRYVNWIKEKTKLT.

Positions 1–28 (MKHLNTVMAESPALITIFLLGYLLSTEC) are cleaved as a signal peptide. Residues 29–46 (AVFLDRENATKILTRPKR) constitute a propeptide that is removed on maturation. Ca(2+)-binding residues include tyrosine 47, asparagine 48, glutamate 53, glutamate 54, glutamate 61, glutamate 63, glutamate 66, glutamate 67, glutamate 72, glutamate 73, and glutamate 76. A Gla domain is found at 47-92 (YNSGKLEEFVRGNLERECIEERCSFEEAREVFENTEKTTEFWKQYV). Glutamate 53, glutamate 54, glutamate 61, glutamate 63, glutamate 66, glutamate 67, glutamate 72, glutamate 73, glutamate 76, glutamate 79, and glutamate 82 each carry 4-carboxyglutamate. Glutamate 61 contributes to the Mg(2+) binding site. Cysteines 64 and 69 form a disulfide. Glutamate 66 is a Mg(2+) binding site. Residue glutamate 72 participates in Mg(2+) binding. Glutamate 76 contacts Mg(2+). Residue glutamate 82 participates in Ca(2+) binding. Residue glutamate 82 participates in Mg(2+) binding. A glycan (O-linked (GalNAc...) threonine) is linked at threonine 85. Residues glutamate 86, aspartate 93, glycine 94, and glutamine 96 each contribute to the Ca(2+) site. A 4-carboxyglutamate modification is found at glutamate 86. Glutamate 86 is a binding site for Mg(2+). The EGF-like 1; calcium-binding domain occupies 93–129 (DGDQCESNPCLNGGICKDDISSYECWCQVGFEGRNCE). Cystine bridges form between cysteine 97/cysteine 108, cysteine 102/cysteine 117, cysteine 119/cysteine 128, cysteine 134/cysteine 145, cysteine 141/cysteine 155, cysteine 157/cysteine 170, cysteine 178/cysteine 345, cysteine 262/cysteine 278, cysteine 392/cysteine 406, and cysteine 417/cysteine 445. Serine 99 is a glycosylation site (O-linked (Glc...) serine). Ca(2+)-binding residues include aspartate 110 and aspartate 111. Aspartate 110 is modified ((3R)-3-hydroxyaspartate). Serine 114 is subject to Phosphoserine. In terms of domain architecture, EGF-like 2 spans 130 to 171 (LDATCNIKNGRCKQFCKNSPDNKVICSCTEGYQLAEDQKSCE). A propeptide spans 193-236 (AETVFSNMDYENSTEAVFIQDDITDGAILNNVTESSESLNDFTR) (activation peptide). Tyrosine 202 carries the post-translational modification Sulfotyrosine. The N-linked (GlcNAc...) asparagine glycan is linked to asparagine 204. Phosphoserine is present on serine 205. Phosphothreonine; alternate is present on threonine 206. Threonine 206 carries O-linked (GalNAc...) threonine; alternate glycosylation. N-linked (GlcNAc...) asparagine glycosylation is present at asparagine 223. 2 O-linked (GalNAc...) threonine glycosylation sites follow: threonine 225 and threonine 235. A Peptidase S1 domain is found at 237 to 469 (VVGGENAKPG…YVNWIKEKTK (233 aa)). The active-site Charge relay system is histidine 277. Glutamate 291, asparagine 293, glutamate 298, and glutamate 301 together coordinate Ca(2+). Aspartate 325 (charge relay system) is an active-site residue. Serine 421 (charge relay system) is an active-site residue.

Belongs to the peptidase S1 family. Heterodimer of a light chain and a heavy chain; disulfide-linked. Interacts (inactive and activated) with F11 (activated) in calcium-dependent manner. Interacts with SERPINC1. Activated by factor XIa, which excises the activation peptide. The propeptide can also be removed by snake venom protease. Activated by coagulation factor VIIa-tissue factor (F7-F3) complex in calcium-dependent manner. In terms of processing, the iron and 2-oxoglutarate dependent 3-hydroxylation of aspartate and asparagine is (R) stereospecific within EGF domains. Post-translationally, predominantly O-glucosylated at Ser-99 by POGLUT1 in vitro. As to expression, detected in liver.

The protein localises to the secreted. The enzyme catalyses Selective cleavage of Arg-|-Ile bond in factor X to form factor Xa.. In terms of biological role, factor IX is a vitamin K-dependent plasma protein that participates in the intrinsic pathway of blood coagulation by converting factor X to its active form in the presence of Ca(2+) ions, phospholipids, and factor VIIIa. The polypeptide is Coagulation factor IX (F9) (Mus musculus (Mouse)).